The primary structure comprises 190 residues: Nuclear transcription factor Y subunit A-7 (190 aa).

Positions 1-33 (MTSSIHELSDNIGSHEKQEQRDSHFQPPIPSAR) are disordered. Residues 7-24 (ELSDNIGSHEKQEQRDSH) are compositionally biased toward basic and acidic residues. A Subunit association domain (SAD) motif is present at residues 103–126 (FVNAKQYHGILRRRQSRARLESQN). The segment at residues 133–158 (KPYLHESRHLHAIRRPRGCGGRFLNA) is a DNA-binding region (NFYA/HAP2-type). The interval 147–190 (RPRGCGGRFLNAKKEDEHHEDSSHEEKSNLSAGKSAMAASSGTS) is disordered. The segment covering 158-174 (AKKEDEHHEDSSHEEKS) has biased composition (basic and acidic residues). Over residues 177-190 (SAGKSAMAASSGTS) the composition is skewed to low complexity.

This sequence belongs to the NFYA/HAP2 subunit family. Heterotrimeric transcription factor composed of three components, NF-YA, NF-YB and NF-YC. NF-YB and NF-YC must interact and dimerize for NF-YA association and DNA binding.

It is found in the nucleus. Functionally, stimulates the transcription of various genes by recognizing and binding to a CCAAT motif in promoters. The polypeptide is Nuclear transcription factor Y subunit A-7 (NFYA7) (Arabidopsis thaliana (Mouse-ear cress)).